Here is a 418-residue protein sequence, read N- to C-terminus: Glutamyl-tRNA reductase (418 aa).

Substrate-binding positions include 49–52 (TCNR), serine 109, 114–116 (EPQ), and glutamine 120. Cysteine 50 acts as the Nucleophile in catalysis. 189–194 (GAGETI) is an NADP(+) binding site.

This sequence belongs to the glutamyl-tRNA reductase family. Homodimer.

It carries out the reaction (S)-4-amino-5-oxopentanoate + tRNA(Glu) + NADP(+) = L-glutamyl-tRNA(Glu) + NADPH + H(+). The protein operates within porphyrin-containing compound metabolism; protoporphyrin-IX biosynthesis; 5-aminolevulinate from L-glutamyl-tRNA(Glu): step 1/2. Catalyzes the NADPH-dependent reduction of glutamyl-tRNA(Glu) to glutamate 1-semialdehyde (GSA). The protein is Glutamyl-tRNA reductase of Pectobacterium atrosepticum (strain SCRI 1043 / ATCC BAA-672) (Erwinia carotovora subsp. atroseptica).